The following is a 427-amino-acid chain: Ribose-phosphate pyrophosphokinase 1 (427 aa).

Mg(2+) is bound by residues D128, H130, and D143. Residues S199, S218, S271, and S295 each carry the phosphoserine modification.

Belongs to the ribose-phosphate pyrophosphokinase family.

The protein localises to the cytoplasm. The enzyme catalyses D-ribose 5-phosphate + ATP = 5-phospho-alpha-D-ribose 1-diphosphate + AMP + H(+). The protein operates within metabolic intermediate biosynthesis; 5-phospho-alpha-D-ribose 1-diphosphate biosynthesis; 5-phospho-alpha-D-ribose 1-diphosphate from D-ribose 5-phosphate (route I): step 1/1. In terms of biological role, 5-phosphoribose 1-diphosphate synthase involved in nucleotide, histidine, and tryptophan biosynthesis. Active in heteromultimeric complexes with other 5-phosphoribose 1-diphosphate synthases (PRS2, PRS3, PRS4 and PRS5). The sequence is that of Ribose-phosphate pyrophosphokinase 1 (PRS1) from Saccharomyces cerevisiae (strain ATCC 204508 / S288c) (Baker's yeast).